A 295-amino-acid polypeptide reads, in one-letter code: Shikimate dehydrogenase (NADP(+)) (295 aa).

Shikimate is bound by residues Ser-24–Ser-26 and Thr-71. Lys-75 (proton acceptor) is an active-site residue. Glu-87 contributes to the NADP(+) binding site. Asn-96 and Asp-111 together coordinate shikimate. NADP(+)-binding positions include Gly-136–Ala-140, Asn-160–Arg-165, and Met-233. A shikimate-binding site is contributed by Tyr-235. Gly-256 provides a ligand contact to NADP(+).

The protein belongs to the shikimate dehydrogenase family. Homodimer.

It catalyses the reaction shikimate + NADP(+) = 3-dehydroshikimate + NADPH + H(+). Its pathway is metabolic intermediate biosynthesis; chorismate biosynthesis; chorismate from D-erythrose 4-phosphate and phosphoenolpyruvate: step 4/7. In terms of biological role, involved in the biosynthesis of the chorismate, which leads to the biosynthesis of aromatic amino acids. Catalyzes the reversible NADPH linked reduction of 3-dehydroshikimate (DHSA) to yield shikimate (SA). The protein is Shikimate dehydrogenase (NADP(+)) of Cupriavidus necator (strain ATCC 17699 / DSM 428 / KCTC 22496 / NCIMB 10442 / H16 / Stanier 337) (Ralstonia eutropha).